We begin with the raw amino-acid sequence, 170 residues long: Large ribosomal subunit protein uL22z (170 aa).

Belongs to the universal ribosomal protein uL22 family.

This chain is Large ribosomal subunit protein uL22z, found in Hordeum vulgare (Barley).